The primary structure comprises 171 residues: UPF0398 protein STER_0279 (171 aa).

This sequence belongs to the UPF0398 family.

This Streptococcus thermophilus (strain ATCC BAA-491 / LMD-9) protein is UPF0398 protein STER_0279.